Consider the following 610-residue polypeptide: Methionine--tRNA ligase (610 aa).

The 'HIGH' region signature appears at 12–22 (PYANGPRHIGH). The Zn(2+) site is built by cysteine 144, cysteine 147, cysteine 157, and cysteine 160. Positions 348-352 (KFSSS) match the 'KMSKS' region motif. Serine 351 lines the ATP pocket.

It belongs to the class-I aminoacyl-tRNA synthetase family. MetG type 1 subfamily. In terms of assembly, monomer. The cofactor is Zn(2+).

The protein resides in the cytoplasm. The enzyme catalyses tRNA(Met) + L-methionine + ATP = L-methionyl-tRNA(Met) + AMP + diphosphate. In terms of biological role, is required not only for elongation of protein synthesis but also for the initiation of all mRNA translation through initiator tRNA(fMet) aminoacylation. The chain is Methionine--tRNA ligase from Corynebacterium glutamicum (strain R).